Consider the following 424-residue polypeptide: MKLEMICTGEEVLAGQIVDTNAAWFGNTMMEHGIECQRRVTVGDRLEDLVSVFKERSHEADVILVNGGLGPTSDDLSAEAMSLAKGEALVENEIWRERLENWFTRNGRVMALSNLKQAMLPESAIMIDNPVGTACGFAVKLNRAWLFFTPGVPFEFKQMVYEQFIPFVKQRFDIAGDVALRKLLTLGQGESSLADTLEQIDLPSGITIGYRSFMPHIEIKLFARGVGAIAQLDRLEAQIRFLLGNAIVACDRKSLAEEIHSLMVNSGLSLSTAESCTGGMIASQLIDLSGSSSYLDQGLVTYSNESKVRVLGVKPETLDDHGAVSIATVEEMAKGVRSILNSDFALATSGIAGPTGGTDDKPVGTVAIALATKGGVYSQMIKLPRRSRELVRSLSTAVAFDMLRRELLGEAVIVDYGSIGRFQK.

This sequence belongs to the CinA family.

The chain is CinA-like protein from Shewanella pealeana (strain ATCC 700345 / ANG-SQ1).